The chain runs to 167 residues: Protein-export protein SecB (167 aa).

Belongs to the SecB family. As to quaternary structure, homotetramer, a dimer of dimers. One homotetramer interacts with 1 SecA dimer.

It localises to the cytoplasm. In terms of biological role, one of the proteins required for the normal export of preproteins out of the cell cytoplasm. It is a molecular chaperone that binds to a subset of precursor proteins, maintaining them in a translocation-competent state. It also specifically binds to its receptor SecA. This chain is Protein-export protein SecB, found in Wolbachia sp. subsp. Brugia malayi (strain TRS).